The sequence spans 427 residues: Light-independent protochlorophyllide reductase subunit N (427 aa).

[4Fe-4S] cluster is bound by residues C28, C53, and C114.

This sequence belongs to the BchN/ChlN family. In terms of assembly, protochlorophyllide reductase is composed of three subunits; BchL, BchN and BchB. Forms a heterotetramer of two BchB and two BchN subunits. It depends on [4Fe-4S] cluster as a cofactor.

The catalysed reaction is chlorophyllide a + oxidized 2[4Fe-4S]-[ferredoxin] + 2 ADP + 2 phosphate = protochlorophyllide a + reduced 2[4Fe-4S]-[ferredoxin] + 2 ATP + 2 H2O. It participates in porphyrin-containing compound metabolism; bacteriochlorophyll biosynthesis (light-independent). Component of the dark-operative protochlorophyllide reductase (DPOR) that uses Mg-ATP and reduced ferredoxin to reduce ring D of protochlorophyllide (Pchlide) to form chlorophyllide a (Chlide). This reaction is light-independent. The NB-protein (BchN-BchB) is the catalytic component of the complex. The chain is Light-independent protochlorophyllide reductase subunit N from Jannaschia sp. (strain CCS1).